Reading from the N-terminus, the 99-residue chain is Nucleoid-associated protein EbfC (99 aa).

The protein belongs to the YbaB/EbfC family. As to quaternary structure, homodimer. Can form tetramers and octamers in solution.

It is found in the cytoplasm. It localises to the nucleoid. Its function is as follows. Binds to DNA and alters its conformation. May be involved in global regulation of gene expression. Binds specifically and non-specifically to DNA, preferentially to the 4 bp broken palindrome 5'-GTnAC-3'. Affects expression of a wide variety of genes, encoding both structural and metabolic proteins. This chain is Nucleoid-associated protein EbfC, found in Borreliella burgdorferi (strain ATCC 35210 / DSM 4680 / CIP 102532 / B31) (Borrelia burgdorferi).